A 629-amino-acid polypeptide reads, in one-letter code: FAST kinase domain-containing protein 4 (629 aa).

Residues 559-617 (IAFLRWEFPNFNSRSKDLLGRFVLARRHVLAAGFLVVDVPYYEWLDLKSEWQKTAYLKD) enclose the RAP domain.

The protein belongs to the FAST kinase family.

It is found in the mitochondrion matrix. Functionally, plays a role in processing of mitochondrial RNA precursors and in stabilization of a subset of mature mitochondrial RNA species, such as MT-CO1, MT-CO2, MT-CYB, MT-CO3, MT-ND3, MT-ND5 and MT-ATP8/6. May play a role in cell cycle progression. The sequence is that of FAST kinase domain-containing protein 4 (Tbrg4) from Rattus norvegicus (Rat).